Here is an 81-residue protein sequence, read N- to C-terminus: Sulfur carrier protein TusA (81 aa).

The active-site Cysteine persulfide intermediate is the cysteine 19.

Belongs to the sulfur carrier protein TusA family.

The protein localises to the cytoplasm. In terms of biological role, sulfur carrier protein which probably makes part of a sulfur-relay system. This chain is Sulfur carrier protein TusA, found in Shewanella denitrificans (strain OS217 / ATCC BAA-1090 / DSM 15013).